The following is a 378-amino-acid chain: D-alanine--D-alanine ligase (378 aa).

The ATP-grasp domain maps to 140 to 346 (KKIISQAGIR…YSDLIDRLIQ (207 aa)). 170 to 225 (EEKLGNLTFVKPAKQGSSVGIHRVTNAEEYEKALDDAFKYDYKILVEQGIANPQEI) serves as a coordination point for ATP. Mg(2+) is bound by residues Asp300, Glu313, and Asn315.

It belongs to the D-alanine--D-alanine ligase family. The cofactor is Mg(2+). Mn(2+) serves as cofactor.

The protein resides in the cytoplasm. The catalysed reaction is 2 D-alanine + ATP = D-alanyl-D-alanine + ADP + phosphate + H(+). It functions in the pathway cell wall biogenesis; peptidoglycan biosynthesis. Functionally, cell wall formation. This chain is D-alanine--D-alanine ligase, found in Limosilactobacillus reuteri (strain DSM 20016) (Lactobacillus reuteri).